Consider the following 81-residue polypeptide: MQPLVIIAIAALVVAIIIAIVVWTIVYIEYRRIKRQRKIDCLIDRIRERAEDSGNESEGEREELSKLVEMGHHAPWDVDDL.

The Extracellular segment spans residues 1–7 (MQPLVII). A helical membrane pass occupies residues 8-28 (AIAALVVAIIIAIVVWTIVYI). The Cytoplasmic segment spans residues 29–81 (EYRRIKRQRKIDCLIDRIRERAEDSGNESEGEREELSKLVEMGHHAPWDVDDL). Positions 50 to 81 (AEDSGNESEGEREELSKLVEMGHHAPWDVDDL) are disordered. Phosphoserine; by host CK2 occurs at positions 53 and 57. The span at 62 to 81 (EELSKLVEMGHHAPWDVDDL) shows a compositional bias: basic and acidic residues.

This sequence belongs to the HIV-1 VPU protein family. Homopentamer. Interacts with host CD4 and BRTC; these interactions induce proteasomal degradation of CD4. Interacts with host BST2; this interaction leads to the degradation of host BST2. Interacts with host FBXW11. Interacts with host AP1M1; this interaction plays a role in the mistrafficking and subsequent degradation of host BST2. Interacts with host RANBP2; this interaction allows Vpu to down-regulate host BLM sumoylation. Phosphorylated by host CK2. This phosphorylation is necessary for interaction with human BTRC and degradation of CD4.

The protein localises to the host membrane. Its activity is regulated as follows. Ion channel activity is inhibited by hexamethylene amiloride in vitro. Functionally, enhances virion budding by targeting host CD4 and Tetherin/BST2 to proteasome degradation. Degradation of CD4 prevents any unwanted premature interactions between viral Env and its host receptor CD4 in the endoplasmic reticulum. Degradation of antiretroviral protein Tetherin/BST2 is important for virion budding, as BST2 tethers new viral particles to the host cell membrane. Mechanistically, Vpu bridges either CD4 or BST2 to BTRC, a substrate recognition subunit of the Skp1/Cullin/F-box protein E3 ubiquitin ligase, induces their ubiquitination and subsequent proteasomal degradation. The alteration of the E3 ligase specificity by Vpu seems to promote the degradation of host IKBKB, leading to NF-kappa-B down-regulation and subsequent apoptosis. Acts as a viroporin that forms an oligomeric ion channel in membranes. Modulates the host DNA repair mechanisms to promote degradation of nuclear viral cDNA in cells that are already productively infected in order to suppress immune sensing and proviral hyper-integration (superinfection). Manipulates PML-NBs and modulates SUMOylation of host BLM protein thereby enhancing its DNA-end processing activity toward viral unintegrated linear DNA. Also inhibits RAD52-mediated homologous repair of viral cDNA, preventing the generation of dead-end circular forms of single copies of the long terminal repeat and permitting sustained nucleolytic attack. In Human immunodeficiency virus type 1 group M subtype D (isolate NDK) (HIV-1), this protein is Protein Vpu.